The sequence spans 805 residues: Leucine--tRNA ligase (805 aa).

The short motif at 40–51 (PYPSGAGLHVGH) is the 'HIGH' region element. Residues 576–580 (KMSKS) carry the 'KMSKS' region motif. K579 lines the ATP pocket.

Belongs to the class-I aminoacyl-tRNA synthetase family.

Its subcellular location is the cytoplasm. It carries out the reaction tRNA(Leu) + L-leucine + ATP = L-leucyl-tRNA(Leu) + AMP + diphosphate. In Geobacillus thermodenitrificans (strain NG80-2), this protein is Leucine--tRNA ligase.